Consider the following 391-residue polypeptide: Probable chaperonin-like protein PrmG (391 aa).

The interval 153-191 (TTRWSVRSSPPPSNTSARTASSPPRRATHSGCRSRSSTA) is disordered. The segment covering 154–174 (TRWSVRSSPPPSNTSARTASS) has biased composition (polar residues).

This sequence belongs to the chaperonin (HSP60) family.

Its function is as follows. Probably plays an essential role in the productive folding of PrmA and PrmC, and thus in the formation of the active PrmABCD complex. This Gordonia sp. (strain TY-5) protein is Probable chaperonin-like protein PrmG.